The following is a 283-amino-acid chain: Protein ATAF2 (283 aa).

An NAC domain is found at 7–159 (LPAGFRFHPT…DWVLCRIYNK (153 aa)). The DNA-binding element occupies 103–165 (LGIKKALVFY…IYNKKGTMEK (63 aa)). The tract at residues 171–211 (EKPRTTTMAEQSSSPFDTSDSTYPTLQEDDSSSSGGHGHVV) is disordered. Polar residues predominate over residues 175 to 195 (TTTMAEQSSSPFDTSDSTYPT).

In terms of assembly, homodimer. Interacts with AHK2. Interacts with AHL12 and AHL27. Interacts with the helicase domain of the tobamovirus (TMV) replicase. In terms of tissue distribution, expressed in roots, cotyledons, rosette leaves, cauline leaves and mature flowers. Expressed at low levels in stems and flower buds.

The protein localises to the nucleus. Functionally, involved in disease resistance response. May function as repressor of pathogenesis-related proteins. May function in the regulation of host basal defense responses against viral infection. Transcriptional activator involved in responses to wounding and infection with tobamovirus (TMV). Binds to the DNA sequences 5'-AAAATATCT-3' and 5'AGATTTTT-3' of CYP734A1/BAS1 and CYP72C1/SOB7 promoters, respectively. Acts as a suppressor of the brassinosteroid (BR)-inactivating enzymes CYP734A1/BAS1 and CYP72C1/SOB7, and prevents their expression in almost all tissues. Plays a central role in integrating BR homeostasis and seedling development. Regulates the spatial regulation of BR homeostasis and participates in the regulation of hypocotyl elongation and root growth by suppressing BR catabolism. Mediates connection between BR catabolism and photomorphogenesis. Binds to, and transactivates the promoter of the auxin biosynthetic gene NIT2. Stress-responsive NAC transcription factor involved in ABA-inducible leaf senescence signaling. Required for normal seed development and morphology. This Arabidopsis thaliana (Mouse-ear cress) protein is Protein ATAF2 (NAC081).